Consider the following 114-residue polypeptide: uncharacterized protein (114 aa).

Positions 40, 106, and 108 each coordinate Fe cation.

It belongs to the HesB/IscA family. Ycf83 subfamily.

The protein localises to the plastid. It localises to the chloroplast. This is an uncharacterized protein from Pyropia yezoensis (Susabi-nori).